Consider the following 259-residue polypeptide: 4-hydroxy-tetrahydrodipicolinate reductase (259 aa).

9–14 (GANGRM) serves as a coordination point for NAD(+). Arg-37 contacts NADP(+). Residues 92-94 (GTT) and 116-119 (ASNM) each bind NAD(+). The Proton donor/acceptor role is filled by His-149. His-150 lines the (S)-2,3,4,5-tetrahydrodipicolinate pocket. The active-site Proton donor is Lys-153. 159–160 (GT) lines the (S)-2,3,4,5-tetrahydrodipicolinate pocket.

It belongs to the DapB family.

It localises to the cytoplasm. It catalyses the reaction (S)-2,3,4,5-tetrahydrodipicolinate + NAD(+) + H2O = (2S,4S)-4-hydroxy-2,3,4,5-tetrahydrodipicolinate + NADH + H(+). It carries out the reaction (S)-2,3,4,5-tetrahydrodipicolinate + NADP(+) + H2O = (2S,4S)-4-hydroxy-2,3,4,5-tetrahydrodipicolinate + NADPH + H(+). Its pathway is amino-acid biosynthesis; L-lysine biosynthesis via DAP pathway; (S)-tetrahydrodipicolinate from L-aspartate: step 4/4. In terms of biological role, catalyzes the conversion of 4-hydroxy-tetrahydrodipicolinate (HTPA) to tetrahydrodipicolinate. The chain is 4-hydroxy-tetrahydrodipicolinate reductase from Desulfovibrio desulfuricans (strain ATCC 27774 / DSM 6949 / MB).